A 116-amino-acid chain; its full sequence is uncharacterized protein (116 aa).

An N-acetylmuramoyl-L-alanine amidase domain is found at 2–73 (DGSVGTGRQV…PKALICGHRD (72 aa)).

The protein to phage T3 and T7 N-acetylmuramoyl-L-alanine amidases.

This is an uncharacterized protein from Haemophilus influenzae (strain ATCC 51907 / DSM 11121 / KW20 / Rd).